The following is a 208-amino-acid chain: NADH-ubiquinone oxidoreductase chain 4 (208 aa).

The next 6 helical transmembrane spans lie at 23–43 (VWINVTTYSLLINLISINLLW), 60–80 (PLSAPLLVLTTWLLPLMLLAS), 93–113 (KLYISLLVCLQTLLIMTFSAN), 114–134 (ELIMFYILFEATLIPTLIIIT), 147–167 (IYFLFYTLVGSIPLLIALIYI), and 185–205 (PINQTWSNNILWLACIMAFMV).

It belongs to the complex I subunit 4 family. Core subunit of respiratory chain NADH dehydrogenase (Complex I) which is composed of 45 different subunits.

Its subcellular location is the mitochondrion inner membrane. It carries out the reaction a ubiquinone + NADH + 5 H(+)(in) = a ubiquinol + NAD(+) + 4 H(+)(out). Core subunit of the mitochondrial membrane respiratory chain NADH dehydrogenase (Complex I) which catalyzes electron transfer from NADH through the respiratory chain, using ubiquinone as an electron acceptor. Essential for the catalytic activity and assembly of complex I. The protein is NADH-ubiquinone oxidoreductase chain 4 (MT-ND4) of Microtus pennsylvanicus (Meadow vole).